The following is a 750-amino-acid chain: Photosystem I P700 chlorophyll a apoprotein A1 (750 aa).

The next 8 helical transmembrane spans lie at 70 to 93 (VFSA…FHGA), 156 to 179 (LYCT…FHYH), 195 to 219 (LNHH…HVSL), 291 to 309 (IAHH…GHMY), 346 to 369 (WHAQ…HHMY), 385 to 411 (LSLF…IFMV), 433 to 455 (AIIS…LYIH), and 531 to 549 (FLVH…LILL). [4Fe-4S] cluster is bound by residues C573 and C582. 2 helical membrane-spanning segments follow: residues 589-610 (HVFL…HFSW) and 664-686 (LSAY…MFLF). Position 675 (H675) interacts with chlorophyll a'. Chlorophyll a-binding residues include M683 and Y691. Residue W692 coordinates phylloquinone. Residues 724 to 744 (AVGVTHYLLGGIATTWAFFLA) traverse the membrane as a helical segment.

This sequence belongs to the PsaA/PsaB family. The PsaA/B heterodimer binds the P700 chlorophyll special pair and subsequent electron acceptors. PSI consists of a core antenna complex that captures photons, and an electron transfer chain that converts photonic excitation into a charge separation. The eukaryotic PSI reaction center is composed of at least 11 subunits. P700 is a chlorophyll a/chlorophyll a' dimer, A0 is one or more chlorophyll a, A1 is one or both phylloquinones and FX is a shared 4Fe-4S iron-sulfur center. is required as a cofactor.

Its subcellular location is the plastid. It localises to the chloroplast thylakoid membrane. The catalysed reaction is reduced [plastocyanin] + hnu + oxidized [2Fe-2S]-[ferredoxin] = oxidized [plastocyanin] + reduced [2Fe-2S]-[ferredoxin]. In terms of biological role, psaA and PsaB bind P700, the primary electron donor of photosystem I (PSI), as well as the electron acceptors A0, A1 and FX. PSI is a plastocyanin-ferredoxin oxidoreductase, converting photonic excitation into a charge separation, which transfers an electron from the donor P700 chlorophyll pair to the spectroscopically characterized acceptors A0, A1, FX, FA and FB in turn. Oxidized P700 is reduced on the lumenal side of the thylakoid membrane by plastocyanin. The protein is Photosystem I P700 chlorophyll a apoprotein A1 of Aethionema grandiflorum (Persian stone-cress).